The following is a 417-amino-acid chain: Serine protease hepsin (417 aa).

Over 1-23 the chain is Cytoplasmic; the sequence is MAQKEGGRTVPCCSRPKVAALTA. A helical; Signal-anchor for type II membrane protein transmembrane segment spans residues 24–44; the sequence is GTLLLLTAIGAASWAIVAVLL. Residues 45–417 lie on the Extracellular side of the membrane; sequence RSDQEPLYPV…SEASGMVTQL (373 aa). An SRCR domain is found at 54-151; the sequence is VQVSSADARL…RGRFLAAICQ (98 aa). Disulfide bonds link cysteine 77–cysteine 140, cysteine 90–cysteine 150, cysteine 119–cysteine 138, cysteine 153–cysteine 277, cysteine 188–cysteine 204, cysteine 291–cysteine 359, cysteine 322–cysteine 338, and cysteine 349–cysteine 381. A glycan (N-linked (GlcNAc...) asparagine) is linked at asparagine 112. In terms of domain architecture, Peptidase S1 spans 163–405; the sequence is IVGGRDTSLG…FREWIFQAIK (243 aa). Catalysis depends on charge relay system residues histidine 203 and aspartate 257. The active-site Charge relay system is the serine 353.

This sequence belongs to the peptidase S1 family. As to expression, detected in liver and kidney.

The protein localises to the cell membrane. It is found in the apical cell membrane. It carries out the reaction Cleavage after basic amino-acid residues, with Arg strongly preferred to Lys.. In terms of biological role, serine protease that cleaves extracellular substrates, and contributes to the proteolytic processing of growth factors, such as HGF and MST1/HGFL. Plays a role in cell growth and maintenance of cell morphology. Plays a role in the proteolytic processing of ACE2. Mediates the proteolytic cleavage of urinary UMOD that is required for UMOD polymerization. The polypeptide is Serine protease hepsin (HPN) (Homo sapiens (Human)).